We begin with the raw amino-acid sequence, 77 residues long: ATP synthase subunit 9, mitochondrial (77 aa).

Transmembrane regions (helical) follow at residues 8-28 and 45-72; these read MGAG…GNVL and LFGY…LISF.

The protein belongs to the ATPase C chain family. In terms of assembly, F-type ATPases have 2 components, CF(1) - the catalytic core - and CF(0) - the membrane proton channel. CF(1) has five subunits: alpha(3), beta(3), gamma(1), delta(1), epsilon(1). CF(0) has three main subunits: a, b and c.

Its subcellular location is the mitochondrion membrane. Its function is as follows. This protein is one of the chains of the nonenzymatic membrane component (F0) of mitochondrial ATPase. This Petunia sp. (Petunia) protein is ATP synthase subunit 9, mitochondrial (ATP9).